The following is a 745-amino-acid chain: Phosphoribosylformylglycinamidine synthase subunit PurL (745 aa).

Residue histidine 47 is part of the active site. Tyrosine 50 and lysine 90 together coordinate ATP. Residue glutamate 92 coordinates Mg(2+). Substrate contacts are provided by residues 93 to 96 (SHNH) and arginine 115. Histidine 94 functions as the Proton acceptor in the catalytic mechanism. Aspartate 116 contributes to the Mg(2+) binding site. Position 240 (glutamine 240) interacts with substrate. Residue aspartate 268 participates in Mg(2+) binding. A substrate-binding site is contributed by 312-314 (ESQ). ATP contacts are provided by asparagine 501 and glycine 538. Position 539 (asparagine 539) interacts with Mg(2+). Serine 541 lines the substrate pocket.

This sequence belongs to the FGAMS family. As to quaternary structure, monomer. Part of the FGAM synthase complex composed of 1 PurL, 1 PurQ and 2 PurS subunits.

It is found in the cytoplasm. It catalyses the reaction N(2)-formyl-N(1)-(5-phospho-beta-D-ribosyl)glycinamide + L-glutamine + ATP + H2O = 2-formamido-N(1)-(5-O-phospho-beta-D-ribosyl)acetamidine + L-glutamate + ADP + phosphate + H(+). It functions in the pathway purine metabolism; IMP biosynthesis via de novo pathway; 5-amino-1-(5-phospho-D-ribosyl)imidazole from N(2)-formyl-N(1)-(5-phospho-D-ribosyl)glycinamide: step 1/2. Functionally, part of the phosphoribosylformylglycinamidine synthase complex involved in the purines biosynthetic pathway. Catalyzes the ATP-dependent conversion of formylglycinamide ribonucleotide (FGAR) and glutamine to yield formylglycinamidine ribonucleotide (FGAM) and glutamate. The FGAM synthase complex is composed of three subunits. PurQ produces an ammonia molecule by converting glutamine to glutamate. PurL transfers the ammonia molecule to FGAR to form FGAM in an ATP-dependent manner. PurS interacts with PurQ and PurL and is thought to assist in the transfer of the ammonia molecule from PurQ to PurL. The protein is Phosphoribosylformylglycinamidine synthase subunit PurL of Leptospira interrogans serogroup Icterohaemorrhagiae serovar Lai (strain 56601).